The sequence spans 672 residues: MAGSIVFVTDNQISANSRHKPRFRRRRGACESCKRRKVRCNGTNPCNQCQKSSIECLYSSSSWKANDGDTERGPSGSPVQHTRGSLTPPQTSPYGGMACNGSAEESSRFDGSDAHSLLMSLSNTDCTTNTEATEMSQWQNWFVSDLPLGSDVQLTGTSDESLTDWLDPQLVNPADTAAIMQTLSGEDLFKSSGPSYGMSEPPSRDSDPGFNTARNEQIAGFIQKLRSQRPFVLRDENPEAPPGNIRGFYDAKFISQCFDACDADPEGVRVLLERKSMDLIADEITKYALAVDTETSVLFHSLMAIGCHSLNLDQGHRAIGKGKYPASKFFKEALNARQHLRDSPSLGGLQAILTMAYFSARVGDDSTSSFLADAAFCVQTLQLHNAGAIEQKYNSFLEQQVAKRALWFLYSLEKPRCLAQGLLPLIHDDFVDYDPPPSANYSTSEVDWFAINARFARICSSIIKERLGCKLGRTPSRRGKDRASEYSASSVIKRLESLLEEWRDDLPFAGDFDATRSDEFAASTCAERRHRIKCLNKYWSAIIATHSGQARGVAEDGGAGVRLSRARCIDAAQAILQNSHYVTSTDILSDISLYYYITVATRVIMTVVIRDRFASDITGDPVQKNTATRKRETTHGRSIMSYVGIAIGLFSRLSLDIDVPVDEVTELGKLGR.

The zn(2)-C6 fungal-type DNA-binding region spans 30-56; that stretch reads CESCKRRKVRCNGTNPCNQCQKSSIEC. Disordered stretches follow at residues 65–111 and 190–212; these read ANDG…RFDG and KSSG…GFNT. A compositionally biased stretch (polar residues) spans 77–93; sequence SPVQHTRGSLTPPQTSP.

The protein localises to the nucleus. Its function is as follows. Transcription factor that regulates the expression of the gene cluster that mediates the biosynthesis of fumonisins B1 (FB1), B2 (FB2), B3 (FB3), and B4 (FB4), which are carcinogenic mycotoxins. The protein is Fumonisin cluster-specific transcription factor FUM21 (FUM21) of Gibberella moniliformis (strain M3125 / FGSC 7600) (Maize ear and stalk rot fungus).